The following is a 495-amino-acid chain: Aspartyl/glutamyl-tRNA(Asn/Gln) amidotransferase subunit B (495 aa).

This sequence belongs to the GatB/GatE family. GatB subfamily. As to quaternary structure, heterotrimer of A, B and C subunits.

The enzyme catalyses L-glutamyl-tRNA(Gln) + L-glutamine + ATP + H2O = L-glutaminyl-tRNA(Gln) + L-glutamate + ADP + phosphate + H(+). It catalyses the reaction L-aspartyl-tRNA(Asn) + L-glutamine + ATP + H2O = L-asparaginyl-tRNA(Asn) + L-glutamate + ADP + phosphate + 2 H(+). Its function is as follows. Allows the formation of correctly charged Asn-tRNA(Asn) or Gln-tRNA(Gln) through the transamidation of misacylated Asp-tRNA(Asn) or Glu-tRNA(Gln) in organisms which lack either or both of asparaginyl-tRNA or glutaminyl-tRNA synthetases. The reaction takes place in the presence of glutamine and ATP through an activated phospho-Asp-tRNA(Asn) or phospho-Glu-tRNA(Gln). This chain is Aspartyl/glutamyl-tRNA(Asn/Gln) amidotransferase subunit B, found in Methanosarcina barkeri (strain Fusaro / DSM 804).